We begin with the raw amino-acid sequence, 179 residues long: MYKFLVFSSVLVLFFAQASCQRFIQPTFRPPPTQRPIIRTARQAGQEPLWLYQGDNVPRAPSTADHPILPSKIDDVQLDPNRRYVRSVTNPENNEASIEHSHHTVDTGLDQPIESHRNTRDLRFLYPRGKLPVPTPPPFNPKPIYIDMGNRYRRHASDDQEELRQYNEHFLIPRDIFQE.

An N-terminal signal peptide occupies residues 1–16; sequence MYKFLVFSSVLVLFFA. The propeptide occupies 17–120; that stretch reads QASCQRFIQP…QPIESHRNTR (104 aa). The disordered stretch occupies residues 93–116; sequence NNEASIEHSHHTVDTGLDQPIESH. An O-linked (GalNAc...) threonine glycan is attached at threonine 135. Positions 153–179 are excised as a propeptide; that stretch reads RRHASDDQEELRQYNEHFLIPRDIFQE.

Belongs to the lebocin family. Post-translationally, O-glycosylation is important for the antibacterial activity of lebocin, O-linked glycan structure is a disaccharide (Gal-GalNAc) in case of lebocin 1 and a monosaccharide (GalNAc) in case of lebocin 2. Hemolymph. Produced in fat body.

The protein resides in the secreted. Antibacterial peptide. This Bombyx mori (Silk moth) protein is Lebocin-1/2.